The sequence spans 218 residues: ATP phosphoribosyltransferase (218 aa).

This sequence belongs to the ATP phosphoribosyltransferase family. Short subfamily. In terms of assembly, heteromultimer composed of HisG and HisZ subunits.

The protein localises to the cytoplasm. The enzyme catalyses 1-(5-phospho-beta-D-ribosyl)-ATP + diphosphate = 5-phospho-alpha-D-ribose 1-diphosphate + ATP. The protein operates within amino-acid biosynthesis; L-histidine biosynthesis; L-histidine from 5-phospho-alpha-D-ribose 1-diphosphate: step 1/9. In terms of biological role, catalyzes the condensation of ATP and 5-phosphoribose 1-diphosphate to form N'-(5'-phosphoribosyl)-ATP (PR-ATP). Has a crucial role in the pathway because the rate of histidine biosynthesis seems to be controlled primarily by regulation of HisG enzymatic activity. The protein is ATP phosphoribosyltransferase of Burkholderia mallei (strain ATCC 23344).